The primary structure comprises 212 residues: Ribosomal RNA small subunit methyltransferase G (212 aa).

Residues Gly80, Leu85, 131–132, and Arg146 each bind S-adenosyl-L-methionine; that span reads AE.

This sequence belongs to the methyltransferase superfamily. RNA methyltransferase RsmG family.

It is found in the cytoplasm. The enzyme catalyses guanosine(527) in 16S rRNA + S-adenosyl-L-methionine = N(7)-methylguanosine(527) in 16S rRNA + S-adenosyl-L-homocysteine. Functionally, specifically methylates the N7 position of guanine in position 527 of 16S rRNA. In Xanthomonas oryzae pv. oryzae (strain MAFF 311018), this protein is Ribosomal RNA small subunit methyltransferase G.